A 398-amino-acid polypeptide reads, in one-letter code: 2-amino-3-ketobutyrate coenzyme A ligase (398 aa).

Residue 111 to 112 (CF) coordinates pyridoxal 5'-phosphate. His-136 serves as a coordination point for substrate. Pyridoxal 5'-phosphate contacts are provided by residues Ser-185, 210 to 213 (DDSH), 241 to 244 (TLGK), and 274 to 275 (SN). An N6-(pyridoxal phosphate)lysine modification is found at Lys-244. Position 368 (Arg-368) interacts with substrate.

This sequence belongs to the class-II pyridoxal-phosphate-dependent aminotransferase family. As to quaternary structure, homodimer. The cofactor is pyridoxal 5'-phosphate.

The catalysed reaction is glycine + acetyl-CoA = (2S)-2-amino-3-oxobutanoate + CoA. It participates in amino-acid degradation; L-threonine degradation via oxydo-reductase pathway; glycine from L-threonine: step 2/2. In terms of biological role, catalyzes the cleavage of 2-amino-3-ketobutyrate to glycine and acetyl-CoA. The sequence is that of 2-amino-3-ketobutyrate coenzyme A ligase from Escherichia coli (strain K12).